The primary structure comprises 519 residues: Voltage-gated potassium channel regulatory subunit KCNG4 (519 aa).

The disordered stretch occupies residues 1-25 (MPMPSRDGGLHPRHHHYGSHSPWSQ). Residues 1 to 218 (MPMPSRDGGL…EMVENPQSGL (218 aa)) are Cytoplasmic-facing. The chain crosses the membrane as a helical span at residues 219 to 240 (PGKVFACLSILFVATTAVSLCV). Topologically, residues 241–261 (STMPDLRAEEDQGECSRKCYY) are extracellular. The helical transmembrane segment at 262–283 (IFIVETICVAWFSLEFCLRFVQ) threads the bilayer. Residues 284-294 (AQDKCQFFQGP) lie on the Cytoplasmic side of the membrane. The chain crosses the membrane as a helical span at residues 295 to 314 (LNIIDILAISPYYVSLAVSE). Residues 315-328 (EPPEDGERPSGSSY) are Extracellular-facing. A helical; Voltage-sensor membrane pass occupies residues 329 to 353 (LEKVGLVLRVLRALRILYVMRLARH). At 354–368 (SLGLQTLGLTVRRCT) the chain is on the cytoplasmic side. Residues 369 to 390 (REFGLLLLFLAVAITLFSPLVY) form a helical membrane-spanning segment. The Extracellular segment spans residues 391 to 405 (VAEKESGRVLEFTSI). Positions 406–417 (PASYWWAIISMT) form an intramembrane region, helical. Positions 418 to 423 (TVGYGD) match the Selectivity filter motif. The stretch at 418–425 (TVGYGDMV) is an intramembrane region. Residues 426–432 (PRSVPGQ) are Extracellular-facing. The helical transmembrane segment at 433 to 461 (MVALSSILSGILIMAFPATSIFHTFSHSY) threads the bilayer. Topologically, residues 462 to 519 (LELKKEQEQLQARLRHLQNTGPASECELLDPHVASEHELMNDVNDLILEGPALPIMHM) are cytoplasmic.

The protein belongs to the potassium channel family. G (TC 1.A.1.2) subfamily. Kv6.4/KCNG4 sub-subfamily. Heterotetramer with KCNB1. Does not form homomultimer. As to expression, highly expressed in brain, and at lower levels in liver, small intestine and colon.

It is found in the cell membrane. Regulatory subunit of the voltage-gated potassium (Kv) channel which, when coassembled with KCNB1, modulates the kinetics parameters of the heterotetrameric channel namely the time course of activation, deactivation and inactivation and on the voltage-dependence of activation. Potassium channel subunit that does not form functional channels by itself. Reduces the deactivation rate. Modulates the threshold for activation by shifting by approximately 20 mV in hyperpolarizing direction. Markedly changes the inactivation by shifting the voltage dependence of inactivation by approximately 40 mV in hyperpolarizing direction. Acceleratee activation and enhances the time course of activation. In Homo sapiens (Human), this protein is Voltage-gated potassium channel regulatory subunit KCNG4.